A 206-amino-acid chain; its full sequence is Threonine efflux protein (206 aa).

Residues 1–21 (MMMLFFTVAMVHIVALMSPGP) form a helical membrane-spanning segment. The Periplasmic segment spans residues 22–43 (DFFFVSQTAVSRSRKEAMMGVL). The chain crosses the membrane as a helical span at residues 44 to 64 (GITCGVMVWAGVALLGLHLII). Residues 65–66 (EK) lie on the Cytoplasmic side of the membrane. A helical transmembrane segment spans residues 67 to 87 (MAWLHTIIMVGGGLYLCWMGY). Over 88–149 (QMLRGALKKQ…VGDNVGAAAR (62 aa)) the chain is Periplasmic. The helical transmembrane segment at 150-173 (WGIFALITLETLAWFTVVASLFAL) threads the bilayer. Topologically, residues 174–206 (PKMRRGYQRLAKWIDGFAGALFAGFGIHLIISR) are cytoplasmic.

This sequence belongs to the Rht family.

It is found in the cell inner membrane. In terms of biological role, conducts the efflux of threonine. This chain is Threonine efflux protein (rhtC), found in Salmonella typhimurium (strain LT2 / SGSC1412 / ATCC 700720).